A 341-amino-acid polypeptide reads, in one-letter code: Tetraacyldisaccharide 4'-kinase (341 aa).

65-72 (TVGGSGKT) provides a ligand contact to ATP.

Belongs to the LpxK family.

It carries out the reaction a lipid A disaccharide + ATP = a lipid IVA + ADP + H(+). The protein operates within glycolipid biosynthesis; lipid IV(A) biosynthesis; lipid IV(A) from (3R)-3-hydroxytetradecanoyl-[acyl-carrier-protein] and UDP-N-acetyl-alpha-D-glucosamine: step 6/6. Transfers the gamma-phosphate of ATP to the 4'-position of a tetraacyldisaccharide 1-phosphate intermediate (termed DS-1-P) to form tetraacyldisaccharide 1,4'-bis-phosphate (lipid IVA). This chain is Tetraacyldisaccharide 4'-kinase, found in Shewanella woodyi (strain ATCC 51908 / MS32).